The following is a 450-amino-acid chain: Oxygen-independent coproporphyrinogen III oxidase (450 aa).

Residues 45 to 282 (IPAGGSISLY…RTLILWDGYQ (238 aa)) enclose the Radical SAM core domain. Tyrosine 54 is a binding site for S-adenosyl-L-methionine. [4Fe-4S] cluster contacts are provided by cysteine 60 and cysteine 64. Residue phenylalanine 66 coordinates S-adenosyl-L-methionine. Cysteine 67 serves as a coordination point for [4Fe-4S] cluster. S-adenosyl-L-methionine-binding positions include glycine 111, 112–113 (GT), glutamate 144, glutamine 171, arginine 183, aspartate 208, alanine 242, and isoleucine 328.

This sequence belongs to the anaerobic coproporphyrinogen-III oxidase family. Monomer. Requires [4Fe-4S] cluster as cofactor.

The protein resides in the cytoplasm. It carries out the reaction coproporphyrinogen III + 2 S-adenosyl-L-methionine = protoporphyrinogen IX + 2 5'-deoxyadenosine + 2 L-methionine + 2 CO2. It participates in porphyrin-containing compound metabolism; protoporphyrin-IX biosynthesis; protoporphyrinogen-IX from coproporphyrinogen-III (AdoMet route): step 1/1. Its function is as follows. Involved in the heme and chlorophyll biosynthesis. Catalyzes the anaerobic oxidative decarboxylation of propionate groups of rings A and B of coproporphyrinogen III to yield the vinyl groups in protoporphyrinogen IX. The chain is Oxygen-independent coproporphyrinogen III oxidase (hemZ) from Cereibacter sphaeroides (strain ATCC 17023 / DSM 158 / JCM 6121 / CCUG 31486 / LMG 2827 / NBRC 12203 / NCIMB 8253 / ATH 2.4.1.) (Rhodobacter sphaeroides).